The chain runs to 304 residues: Carnitine monooxygenase reductase subunit (304 aa).

An FAD-binding FR-type domain is found at M1–A93. The 2Fe-2S ferredoxin-type domain occupies F219 to L304. [2Fe-2S] cluster is bound by residues C253, C258, C261, and C291.

It belongs to the PDR/VanB family. CntB subfamily. As to quaternary structure, composed of an oxygenase subunit and a reductase subunit. FMN serves as cofactor. [2Fe-2S] cluster is required as a cofactor.

It catalyses the reaction (R)-carnitine + NADH + O2 + H(+) = (3R)-3-hydroxy-4-oxobutanoate + trimethylamine + NAD(+) + H2O. It carries out the reaction (R)-carnitine + NADPH + O2 + H(+) = (3R)-3-hydroxy-4-oxobutanoate + trimethylamine + NADP(+) + H2O. It participates in amine and polyamine metabolism; carnitine metabolism. Inhibited by EDTA. Functionally, converts carnitine to trimethylamine and malic semialdehyde. Acts on both enantiomers. The protein is Carnitine monooxygenase reductase subunit of Acinetobacter pittii (strain PHEA-2).